The sequence spans 478 residues: Ribosomal RNA small subunit methyltransferase F (478 aa).

Residues 121–127 (ASAPGSK), Glu-145, Asp-172, and Asp-190 contribute to the S-adenosyl-L-methionine site. Catalysis depends on Cys-243, which acts as the Nucleophile.

It belongs to the class I-like SAM-binding methyltransferase superfamily. RsmB/NOP family.

Its subcellular location is the cytoplasm. The catalysed reaction is cytidine(1407) in 16S rRNA + S-adenosyl-L-methionine = 5-methylcytidine(1407) in 16S rRNA + S-adenosyl-L-homocysteine + H(+). Specifically methylates the cytosine at position 1407 (m5C1407) of 16S rRNA. In Shewanella woodyi (strain ATCC 51908 / MS32), this protein is Ribosomal RNA small subunit methyltransferase F.